The chain runs to 449 residues: SWI/SNF chromatin-remodeling accessory subunit 2 (449 aa).

Residues 1 to 11 (MHSQQRPNPQM) show a composition bias toward polar residues. A disordered region spans residues 1-56 (MHSQQRPNPQMNRHPYGTPGSAPQMRRPGGFAGQPPQMHGPRMVAPPAAPLPKKKK). The region spanning 223 to 300 (NHPAKFKLHP…PNKLHQLLQQ (78 aa)) is the SWIB/MDM2 domain.

It belongs to the SMARCD family. As to quaternary structure, component of the multiprotein chromatin-remodeling complexes SWI/SNF: SWI/SNF-A (BAF), SWI/SNF-B (PBAF) and related complexes. The canonical complex contains a catalytic subunit swsn-4, core subunits swsn-1 and swsn-5, and accessory subunits swsn-3, swsn-6, phf-10, dpff-1, swsn-9 and either ham-3/swsn-2.1 or swsn-2.2.

It localises to the nucleus. It is found in the nucleoplasm. Its subcellular location is the chromosome. The protein localises to the nucleus envelope. Involved in transcriptional activation and repression of select genes by chromatin remodeling (alteration of DNA-nucleosome topology). Component of SWI/SNF chromatin remodeling complexes that carry out key enzymatic activities, changing chromatin structure by altering DNA-histone contacts within a nucleosome in an ATP-dependent manner. Probably regulates vulva development through the let-60/Ras pathway. Involved in nuclear reassembly after mitosis and recruitment of nuclear envelope protein, mel-28, to the nuclear periphery in the early embryo and in the adult germline. Involved in gonadogenesis. The polypeptide is SWI/SNF chromatin-remodeling accessory subunit 2 (Caenorhabditis elegans).